The sequence spans 143 residues: MAIYGIGTDLAQVSRIAAVLERTGGRFAEKVLGPDELRVFHARRARSEARGIAFLATRFSAKEAFSKAIGLGMHWPMTWRALQTLNRPSGEPYVVASGELAAWLDARGITARVTVSDERDYAVTFVVAEAPDHVAAARSGAAS.

Mg(2+) contacts are provided by Asp9 and Glu63.

Belongs to the P-Pant transferase superfamily. AcpS family. The cofactor is Mg(2+).

It is found in the cytoplasm. The catalysed reaction is apo-[ACP] + CoA = holo-[ACP] + adenosine 3',5'-bisphosphate + H(+). Functionally, transfers the 4'-phosphopantetheine moiety from coenzyme A to a Ser of acyl-carrier-protein. In Burkholderia pseudomallei (strain 1106a), this protein is Holo-[acyl-carrier-protein] synthase.